The sequence spans 124 residues: Glycine cleavage system H protein (124 aa).

The 83-residue stretch at 22–104 (TATVGITDFA…YGDGWMIEIE (83 aa)) folds into the Lipoyl-binding domain. Position 63 is an N6-lipoyllysine (lysine 63).

The protein belongs to the GcvH family. The glycine cleavage system is composed of four proteins: P, T, L and H. (R)-lipoate is required as a cofactor.

Functionally, the glycine cleavage system catalyzes the degradation of glycine. The H protein shuttles the methylamine group of glycine from the P protein to the T protein. This is Glycine cleavage system H protein from Salinibacter ruber (strain DSM 13855 / M31).